The primary structure comprises 364 residues: Protein PTOV1 homolog (364 aa).

Positions 187–207 are disordered; sequence AKRKPGVKTPKQPQPEEPPPV.

It belongs to the Mediator complex subunit 25 family. PTOV1 subfamily.

The chain is Protein PTOV1 homolog from Drosophila melanogaster (Fruit fly).